Reading from the N-terminus, the 179-residue chain is MPSSSALLCCLVFLAGVAASRDASTLSDSSCTQFPTSLPHMLRELRAAFSRVKTFFQMKDQLDSLLLTQSLLDDFKGYLGCQALSEMIQFYLEEVMPQAENHGPDIKEHVNSLGEKLKTLRLRLRRCHRFLPCENKSKAVEQVKRAFSKLQDRGVYKAMSEFDIFINYIETYVTTKMQK.

The N-terminal stretch at 1–19 (MPSSSALLCCLVFLAGVAA) is a signal peptide. 2 disulfide bridges follow: cysteine 31/cysteine 127 and cysteine 81/cysteine 133. Asparagine 135 carries N-linked (GlcNAc...) asparagine glycosylation.

Belongs to the IL-10 family. As to quaternary structure, homodimer. Interacts with IL10RA and IL10RB.

The protein localises to the secreted. Major immune regulatory cytokine that acts on many cells of the immune system where it has profound anti-inflammatory functions, limiting excessive tissue disruption caused by inflammation. Mechanistically, IL10 binds to its heterotetrameric receptor comprising IL10RA and IL10RB leading to JAK1 and STAT2-mediated phosphorylation of STAT3. In turn, STAT3 translocates to the nucleus where it drives expression of anti-inflammatory mediators. Targets antigen-presenting cells (APCs) such as macrophages and monocytes and inhibits their release of pro-inflammatory cytokines including granulocyte-macrophage colony-stimulating factor /GM-CSF, granulocyte colony-stimulating factor/G-CSF, IL-1 alpha, IL-1 beta, IL-6, IL-8 and TNF-alpha. Also interferes with antigen presentation by reducing the expression of MHC-class II and co-stimulatory molecules, thereby inhibiting their ability to induce T cell activation. In addition, controls the inflammatory response of macrophages by reprogramming essential metabolic pathways including mTOR signaling. The sequence is that of Interleukin-10 (IL10) from Bubalus carabanensis (Swamp type water buffalo).